A 323-amino-acid polypeptide reads, in one-letter code: Phosphate acetyltransferase (323 aa).

It belongs to the phosphate acetyltransferase and butyryltransferase family.

It is found in the cytoplasm. It carries out the reaction acetyl-CoA + phosphate = acetyl phosphate + CoA. It functions in the pathway metabolic intermediate biosynthesis; acetyl-CoA biosynthesis; acetyl-CoA from acetate: step 2/2. The sequence is that of Phosphate acetyltransferase (pta) from Bacillus subtilis (strain 168).